Consider the following 2531-residue polypeptide: Neurogenic locus notch homolog protein 1 (2531 aa).

The signal sequence occupies residues 1 to 18 (MPRLLTPLLCLTLLPALA). Residues 19–1725 (ARGLRCSQPS…VEPPLPSQLH (1707 aa)) are Extracellular-facing. 4 consecutive EGF-like domains span residues 20–58 (RGLRCSQPSGTCLNGGRCEVANGTEACVCSGAFVGQRCQ), 59–99 (DSNP…PLCL), 102–139 (LDNACLANPCRNGGTCDLLTLTEYKCRCPPGWSGKSCQ), and 140–176 (QADPCASNPCANGGQCLPFESSYICRCPPGFHGPTCR). 32 disulfide bridges follow: C24–C37, C31–C46, C63–C74, C68–C87, C89–C98, C106–C117, C111–C127, C129–C138, C144–C155, C149–C164, C166–C175, C182–C195, C189–C204, C206–C215, C222–C233, C227–C243, C245–C254, C261–C272, C266–C281, C283–C292, C299–C312, C306–C321, C323–C332, C339–C350, C344–C359, C361–C370, C376–C387, C381–C398, C400–C409, C416–C429, C423–C438, and C440–C449. O-linked (Glc...) serine glycosylation occurs at S65. An O-linked (Fuc...) threonine glycan is attached at T73. T116 carries an O-linked (Fuc...) threonine glycan. S146 carries O-linked (Glc...) serine glycosylation. One can recognise an EGF-like 5; calcium-binding domain in the interval 178-216 (DVNECSQNPGLCRHGGTCHNEIGSYRCACRATHTGPHCE). The O-linked (Fuc...) threonine glycan is linked to T194. The EGF-like 6 domain maps to 218–255 (PYVPCSPSPCQNGGTCRPTGDTTHECACLPGFAGQNCE). T232 carries an O-linked (Fuc...) threonine; alternate glycan. T232 carries an O-linked (GalNAc...) threonine; alternate glycan. Residues 257–293 (NVDDCPGNNCKNGGACVDGVNTYNCRCPPEWTGQYCT) enclose the EGF-like 7; calcium-binding domain. Residues 295–333 (DVDECQLMPNACQNGGTCHNTHGGYNCVCVNGWTGEDCS) form the EGF-like 8; calcium-binding domain. T311 is a glycosylation site (O-linked (Fuc...) threonine). Residues 335 to 371 (NIDDCASAACFQGATCHDRVASFYCECPHGRTGLLCH) form the EGF-like 9; calcium-binding domain. An O-linked (Glc...) serine glycan is attached at S341. Residue T349 is glycosylated (O-linked (Fuc...) threonine). The region spanning 372 to 410 (LNDACISNPCNEGSNCDTNPVNGKAICTCPSGYTGPACS) is the EGF-like 10; calcium-binding domain. S378 carries O-linked (Glc...) serine glycosylation. In terms of domain architecture, EGF-like 11; calcium-binding spans 412-450 (DVDECALGANPCEHAGKCLNTLGSFECQCLQGYTGPRCE). The interval 420–421 (AN) is interaction with DLL4. 2 residues coordinate Ca(2+): T432 and S435. S435 carries an O-linked (Glc...) serine glycan. The tract at residues 448 to 452 (RCEID) is interaction with DLL4. Ca(2+) contacts are provided by D452, V453, and E455. The 37-residue stretch at 452-488 (DVNECISNPCQNDATCLDQIGEFQCICMPGYEGVYCE) folds into the EGF-like 12; calcium-binding domain. 3 disulfides stabilise this stretch: C456/C467, C461/C476, and C478/C487. S458 carries an O-linked (Glc...) serine glycan. O-linked (Fuc...) threonine glycosylation occurs at T466. Positions 469 and 470 each coordinate Ca(2+). N490, T491, and E493 together coordinate Ca(2+). Residues 490-526 (NTDECASSPCLHNGHCMDKINEFQCQCPKGFNGHLCQ) form the EGF-like 13; calcium-binding domain. Disulfide bonds link C494–C505, C499–C514, C516–C525, C532–C543, C537–C552, C554–C563, C570–C580, C575–C589, C591–C600, C607–C618, C612–C627, C629–C638, C645–C655, C650–C664, C666–C675, C682–C693, C687–C702, C704–C713, C720–C730, C725–C739, C741–C750, C757–C768, C762–C777, C779–C788, C795–C806, C800–C815, C817–C826, C833–C844, C838–C855, C857–C866, C873–C884, C878–C893, C895–C904, C911–C922, C916–C931, C933–C942, C949–C960, C954–C969, C971–C980, C987–C998, C992–C1007, C1009–C1018, C1025–C1036, C1030–C1045, C1047–C1056, C1063–C1074, C1068–C1083, C1085–C1094, C1101–C1122, C1116–C1131, C1133–C1142, C1149–C1160, C1154–C1169, C1171–C1180, C1187–C1198, C1192–C1207, C1209–C1218, C1225–C1244, C1238–C1253, C1255–C1264, C1271–C1284, C1276–C1293, C1295–C1304, C1311–C1322, C1316–C1334, C1336–C1345, C1352–C1363, C1357–C1372, C1374–C1383, C1391–C1403, C1397–C1414, C1416–C1425, C1449–C1472, C1454–C1467, and C1463–C1479. O-linked (Glc...) serine glycosylation occurs at S496. 2 residues coordinate Ca(2+): D507 and K508. The EGF-like 14; calcium-binding domain occupies 528–564 (DVDECASTPCKNGAKCLDGPNTYTCVCTEGYTGTHCE). An O-linked (Glc...) serine glycan is attached at S534. One can recognise an EGF-like 15; calcium-binding domain in the interval 566–601 (DIDECDPDPCHYGSCKDGVATFTCLCQPGYTGHHCE). The 37-residue stretch at 603–639 (NINECHSQPCRHGGTCQDRDNSYLCLCLKGTTGPNCE) folds into the EGF-like 16; calcium-binding domain. Residue S609 is glycosylated (O-linked (Glc...) serine). T617 carries O-linked (Fuc...) threonine glycosylation. Residues 641–676 (NLDDCASNPCDSGTCLDKIDGYECACEPGYTGSMCN) enclose the EGF-like 17; calcium-binding domain. S647 carries an O-linked (Glc...) serine glycan. The 37-residue stretch at 678-714 (NIDECAGSPCHNGGTCEDGIAGFTCRCPEGYHDPTCL) folds into the EGF-like 18; calcium-binding domain. T692 carries an O-linked (Fuc...) threonine glycan. An EGF-like 19; calcium-binding domain is found at 716–751 (EVNECNSNPCIHGACRDGLNGYKCDCAPGWSGTNCD). S722 carries an O-linked (Glc...) serine glycan. Residues 753–789 (NNNECESNPCVNGGTCKDMTSGYVCTCREGFSGPNCQ) enclose the EGF-like 20; calcium-binding domain. O-linked (Glc...) serine glycosylation is present at S759. A glycan (O-linked (Fuc...) threonine) is linked at T767. S784 is a glycosylation site (O-linked (GlcNAc) serine). One can recognise an EGF-like 21; calcium-binding domain in the interval 791-827 (NINECASNPCLNQGTCIDDVAGYKCNCPLPYTGATCE). S797 is a glycosylation site (O-linked (Glc...) serine). The O-linked (Fuc...) threonine glycan is linked to T805. One can recognise an EGF-like 22 domain in the interval 829–867 (VLAPCATSPCKNSGVCKESEDYESFSCVCPTGWQGQTCE). In terms of domain architecture, EGF-like 23; calcium-binding spans 869–905 (DINECVKSPCRHGASCQNTNGSYRCLCQAGYTGRNCE). N-linked (GlcNAc...) asparagine glycosylation occurs at N888. Residue T900 is glycosylated (O-linked (GlcNAc) threonine). The region spanning 907-943 (DIDDCRPNPCHNGGSCTDGINTAFCDCLPGFQGAFCE) is the EGF-like 24 domain. S921 carries O-linked (Fuc) serine glycosylation. Positions 945 to 981 (DINECASNPCQNGANCTDCVDSYTCTCPVGFNGIHCE) constitute an EGF-like 25; calcium-binding domain. S951 carries O-linked (Glc...) serine glycosylation. N959 carries an N-linked (GlcNAc...) asparagine glycan. The 37-residue stretch at 983–1019 (NTPDCTESSCFNGGTCVDGINSFTCLCPPGFTGSYCQ) folds into the EGF-like 26 domain. Residue T997 is glycosylated (O-linked (Fuc...) threonine). The EGF-like 27; calcium-binding domain maps to 1021–1057 (DVNECDSRPCLHGGTCQDSYGTYKCTCPQGYTGLNCQ). Residue S1027 is glycosylated (O-linked (Glc...) serine). T1035 carries an O-linked (Fuc...) threonine glycan. EGF-like domains follow at residues 1059–1095 (LVRWCDSAPCKNGGRCWQTNTQYHCECRSGWTGVNCD) and 1097–1143 (LSVS…SYCE). A glycan (O-linked (Glc...) serine) is linked at S1065. In terms of domain architecture, EGF-like 30; calcium-binding spans 1145–1181 (EVDECSPNPCQNGATCTDYLGGFSCKCVAGYHGSNCS). T1159 carries an O-linked (Fuc...) threonine glycan. N1179 is a glycosylation site (N-linked (GlcNAc...) asparagine). The region spanning 1183–1219 (EINECLSQPCQNGGTCIDLTNSYKCSCPRGTQGVHCE) is the EGF-like 31; calcium-binding domain. O-linked (Glc...) serine glycosylation is present at S1189. Residue T1197 is glycosylated (O-linked (Fuc...) threonine). Positions 1221–1265 (NVDDCHPPLDPASRSPKCFNNGTCVDQVGGYTCTCPPGFVGERCE) constitute an EGF-like 32; calcium-binding domain. N1241 carries an N-linked (GlcNAc...) asparagine glycan. 4 EGF-like domains span residues 1267–1305 (DVNECLSNPCDPRGTQNCVQRVNDFHCECRAGHTGRRCE), 1307–1346 (VINGCRGKPCKNGGVCAVASNTARGFICRCPAGFEGATCE), 1348–1384 (DARTCGSLRCLNGGTCISGPRSPTCLCLGSFTGPECQ), and 1387–1426 (ASSPCVGSNPCYNQGTCEPTSENPFYRCLCPAKFNGLLCH). A glycan (O-linked (Glc...) serine) is linked at S1273. O-linked (Fuc...) threonine glycosylation is present at T1362. An O-linked (GlcNAc...) threonine glycan is attached at T1379. T1402 carries O-linked (Fuc...) threonine; alternate glycosylation. T1402 carries an O-linked (GalNAc...) threonine; alternate glycan. LNR repeat units follow at residues 1449-1489 (CELP…PWKN), 1490-1531 (CTQS…CNPL), and 1532-1571 (YDQYCKDHFSDGHCDQGCNSAECEWDGLDCAEHVPERLAA). 4 residues coordinate Ca(2+): D1457, N1460, D1475, and D1478. Residue N1489 is glycosylated (N-linked (GlcNAc...) asparagine). 5 disulfides stabilise this stretch: C1490–C1514, C1496–C1509, C1505–C1521, C1536–C1549, and C1545–C1561. An N-linked (GlcNAc...) asparagine glycan is attached at N1587. The interaction with PSEN1 stretch occupies residues 1718–1750 (PPLPSQLHLMYVAAAAFVLLFFVGCGVLLSRKR). A helical transmembrane segment spans residues 1726 to 1746 (LMYVAAAAFVLLFFVGCGVLL). Residues 1747 to 2531 (SRKRRRQHGQ…QITHIPEAFK (785 aa)) lie on the Cytoplasmic side of the membrane. K1749 participates in a covalent cross-link: Glycyl lysine isopeptide (Lys-Gly) (interchain with G-Cter in ubiquitin). A disordered region spans residues 1770-1798 (KKKRREPLGEDSVGLKPLKNASDGALMDD). Phosphothreonine is present on T1851. 5 ANK repeats span residues 1917–1946 (TGETALHLAARYSRSDAAKRLLEASADANI), 1950–1980 (MGRTPLHAAVSADAQGVFQILLRNRATDLDA), 1984–2013 (DGTTPLILAARLAVEGMLEDLINSHADVNA), 2017–2046 (LGKSALHWAAAVNNVDAAVVLLKNGANKDM), and 2050–2079 (KEETPLFLAAREGSYETAKVLLDHFANRDI). Residues 1937 to 1945 (LLEASADAN) form an HIF1AN-binding region. N1945 carries the (3S)-3-hydroxyasparagine; by HIF1AN; partial modification. The tract at residues 2004–2012 (LINSHADVN) is HIF1AN-binding. The residue at position 2012 (N2012) is a (3S)-3-hydroxyasparagine; by HIF1AN; partial. Disordered stretches follow at residues 2140 to 2185 (KSAT…DSSS), 2382 to 2428 (QPQN…SLPV), and 2440 to 2531 (PTSL…EAFK). A compositionally biased stretch (low complexity) spans 2382-2395 (QPQNLQPPSQPHLS). Positions 2440–2478 (PTSLPSSMVPPMTTTQFLTPPSQHSYSSSPVDNTPSHQL) are enriched in polar residues. Residues 2488-2503 (PSPESPDQWSSSSPHS) show a composition bias toward low complexity. A compositionally biased stretch (polar residues) spans 2504 to 2524 (NISDWSEGISSPPTTMPSQIT).

Belongs to the NOTCH family. As to quaternary structure, heterodimer of a C-terminal fragment N(TM) and an N-terminal fragment N(EC) which are probably linked by disulfide bonds. Interacts with DNER, DTX1, DTX2 and RBPJ/RBPSUH. Also interacts with MAML1, MAML2 and MAML3 which act as transcriptional coactivators for NOTCH1. Notch 1 intracellular domain interacts with SNW1; the interaction involves multimerized NOTCH1 NICD and is implicated in a formation of an intermediate preactivation complex which associates with DNA-bound CBF-1/RBPJ. The activated membrane-bound form interacts with AAK1 which promotes NOTCH1 stabilization. Forms a trimeric complex with FBXW7 and SGK1. Interacts with HIF1AN. HIF1AN negatively regulates the function of notch intracellular domain (NICD), accelerating myogenic differentiation. Interacts (via NICD) with SNAI1 (via zinc fingers); the interaction induces SNAI1 degradation via MDM2-mediated ubiquitination and inhibits SNAI1-induced cell invasion. Interacts (via NICD) with MDM2A. Interacts (via NICD) with BCL6; the interaction decreases MAML1 recruitment by NOTCH1 NICD on target genes DNA and inhibits NOTCH1 transactivation activity. Interacts with THBS4. Interacts (via the EGF-like repeat region) with CCN3 (via CTCK domain). Interacts (via EGF-like domains) with DLL4 (via N-terminal DSL and MNNL domains). Interacts with ZMIZ1. Interacts (via NICD domain) with MEGF10 (via the cytoplasmic domain). Interacts with DLL1 and JAG1. Interacts (via NICD domain) with PRAG1. Forms a complex with PRAG1, N1ICD and MAML1, in a MAML1-dependent manner. Interacts (via transmembrane region) with PSEN1; the interaction is direct. Interacts with ZFP64. Synthesized in the endoplasmic reticulum as an inactive form which is proteolytically cleaved by a furin-like convertase in the trans-Golgi network before it reaches the plasma membrane to yield an active, ligand-accessible form. Cleavage results in a C-terminal fragment N(TM) and a N-terminal fragment N(EC). Following ligand binding, it is cleaved by ADAM17 to yield a membrane-associated intermediate fragment called notch extracellular truncation (NEXT). Following endocytosis, this fragment is then cleaved by one of the catalytic subunits of gamma-secretase (PSEN1 or PSEN2) to release a Notch-derived peptide containing the intracellular domain (NICD) from the membrane. In terms of processing, phosphorylated. Post-translationally, O-linked glycosylation by GALNT11 is involved in determination of left/right symmetry: glycosylation promotes activation of NOTCH1, possibly by promoting cleavage by ADAM17, modulating the balance between motile and immotile (sensory) cilia at the left-right organiser (LRO). O-glycosylated on the EGF-like domains. O-glucosylated at Ser-435 by KDELC1 and KDELC2. Contains both O-linked fucose and O-linked glucose in the EGF-like domains 11, 12 and 13, which are interacting with the residues on DLL4. O-glycosylation at Ser-1027 is only partial. MFNG-, RFNG- and LFNG-mediated modification of O-fucose residues at specific EGF-like domains results in inhibition of its activation by JAG1 and enhancement of its activation by DLL1 via an increased binding to DLL1. Ubiquitinated. Undergoes 'Lys-29'-linked polyubiquitination by ITCH; promotes the lysosomal degradation of non-activated internalized NOTCH1. Deubiquitination by USP12 is required for transport of internalized non-activated receptor from late endosomes to lysosomes for degradation. Monoubiquitination at Lys-1749 is required for activation by gamma-secretase cleavage, it promotes interaction with AAK1, which stabilizes it. Deubiquitination by EIF3F is necessary for nuclear import of activated Notch. In terms of processing, hydroxylated at Asn-1945 and Asn-2012 by HIF1AN. Hydroxylation reduces affinity for HI1AN and may thus indirectly modulate negative regulation of NICD. In terms of tissue distribution, highly expressed in the brain, lung and thymus. Expressed at lower levels in the spleen, bone-marrow, spinal cord, eyes, mammary gland, liver, intestine, skeletal muscle, kidney and heart. In the hair follicle, highly expressed exclusively in the epithelial compartment.

The protein localises to the cell membrane. It localises to the late endosome membrane. Its subcellular location is the nucleus. Functions as a receptor for membrane-bound ligands Jagged-1 (JAG1), Jagged-2 (JAG2) and Delta-1 (DLL1) to regulate cell-fate determination. Upon ligand activation through the released notch intracellular domain (NICD) it forms a transcriptional activator complex with RBPJ/RBPSUH and activates genes of the enhancer of split locus. Affects the implementation of differentiation, proliferation and apoptotic programs. Involved in angiogenesis; negatively regulates endothelial cell proliferation and migration and angiogenic sprouting. Involved in the maturation of both CD4(+) and CD8(+) cells in the thymus. Important for follicular differentiation and possibly cell fate selection within the follicle. During cerebellar development, functions as a receptor for neuronal DNER and is involved in the differentiation of Bergmann glia. Represses neuronal and myogenic differentiation. May play an essential role in postimplantation development, probably in some aspect of cell specification and/or differentiation. May be involved in mesoderm development, somite formation and neurogenesis. May enhance HIF1A function by sequestering HIF1AN away from HIF1A. Required for the THBS4 function in regulating protective astrogenesis from the subventricular zone (SVZ) niche after injury. Involved in determination of left/right symmetry by modulating the balance between motile and immotile (sensory) cilia at the left-right organiser (LRO). This is Neurogenic locus notch homolog protein 1 (Notch1) from Mus musculus (Mouse).